The chain runs to 1582 residues: MPLAFCGTENHSAAYRVDQGVLNNGCFVDALNVVPHVFLLFITFPILFIGWGSQSSKVHIHHSTWLHFPGHNLRWILTFILLFVLVCEIAEGILSDGVTESRHLHLYMPAGMAFMAAITSVVYYHNIETSNFPKLLIALLIYWTLAFITKTIKFVKFYDHAIGFSQLRFCLTGLLVILYGMLLLVEVNVIRVRRYVFFKTPREVKPPEDLQDLGVRFLQPFVNLLSKGTYWWMNAFIKTAHKKPIDLRAIGKLPIAMRALTNYQRLCLAFDAQARKDTQSQQGARAIWRALCHAFGRRLVLSSTFRILADLLGFAGPLCIFGIVDHLGKENHVFQPKTQFLGVYFVSSQEFLGNAYVLAVLLFLALLLQRTFLQASYYVAIETGINLRGAIQTKIYNKIMHLSTSNLSMGEMTAGQICNLVAIDTNQLMWFFFLCPNLWAMPVQIIVGVILLYYILGVSALIGAAVIILLAPVQYFVATKLSQAQRSTLEYSNERLKQTNEMLRGIKLLKLYAWENIFCSRVEKTRRKEMTSLRAFAVYTSISIFMNTAIPIAAVLITFVGHVSFFKESDFSPSVAFASLSLFHILVTPLFLLSSVVRSTVKALVSVQKLSEFLSSAEIREEQCAPREPAPQGQAGKYQAVPLKVVNRKRPAREEVRDLLGPLQRLTPSTDGDADNFCVQIIGGFFTWTPDGIPTLSNITIRIPRGQLTMIVGQVGCGKSSLLLATLGEMQKVSGAVFWNSSLPDSEGEDPSNPERETAADSDARSRGPVAYASQKPWLLNATVEENITFESPFNKQRYKMVIEACSLQPDIDILPHGDQTQIGERGINLSGGQRQRISVARALYQHTNVVFLDDPFSALDVHLSDHLMQAGILELLRDDKRTVVLVTHKLQYLPHADWIIAMKDGTIQREGTLKDFQRSECQLFEHWKTLMNRQDQELEKETVMERKAPEPSQGLPRAMSSRDGLLLDEDEEEEEAAESEEDDNLSSVLHQRAKIPWRACTKYLSSAGILLLSLLVFSQLLKHMVLVAIDYWLAKWTDSALVLSPAARNCSLSQECALDQSVYAMVFTVLCSLGIALCLVTSVTVEWTGLKVAKRLHRSLLNRIILAPMRFFETTPLGSILNRFSSDCNTIDQHIPSTLECLSRSTLLCVSALAVISYVTPVFLVALLPLAVVCYFIQKYFRVASRDLQQLDDTTQLPLLSHFAETVEGLTTIRAFRYEARFQQKLLEYTDSNNIASLFLTAANRWLEVRMEYIGACVVLIAAATSISNSLHRELSAGLVGLGLTYALMVSNYLNWMVRNLADMEIQLGAVKRIHTLLKTEAESYEGLLAPSLIPKNWPDQGKIQIQNLSVRYDSSLKPVLKHVNALISPGQKIGICGRTGSGKSSFSLAFFRMVDMFEGRIIIDGIDIAKLPLHTLRSRLSIILQDPVLFSGTIRFNLDPEKKCSDSTLWEALEIAQLKLVVKALPGGLDAIITEGGENFSQGQRQLFCLARAFVRKTSIFIMDEATASIDMATENILQKVVMTAFADRTVVTIAHRVHTILSADLVMVLKRGAILEFDKPEKLLSQKDSVFASFVRADK.

Residues 1-30 lie on the Extracellular side of the membrane; it reads MPLAFCGTENHSAAYRVDQGVLNNGCFVDA. An intrachain disulfide couples Cys-6 to Cys-26. N-linked (GlcNAc...) asparagine glycosylation occurs at Asn-10. The chain crosses the membrane as a helical span at residues 31–47; sequence LNVVPHVFLLFITFPIL. Topologically, residues 48 to 72 are cytoplasmic; sequence FIGWGSQSSKVHIHHSTWLHFPGHN. Residues 73-89 traverse the membrane as a helical segment; it reads LRWILTFILLFVLVCEI. At 90-106 the chain is on the extracellular side; it reads AEGILSDGVTESRHLHL. Residues 107 to 123 traverse the membrane as a helical segment; that stretch reads YMPAGMAFMAAITSVVY. The Cytoplasmic segment spans residues 124-136; the sequence is YHNIETSNFPKLL. A helical membrane pass occupies residues 137–153; it reads IALLIYWTLAFITKTIK. At 154 to 169 the chain is on the extracellular side; it reads FVKFYDHAIGFSQLRF. Residues 170–186 form a helical membrane-spanning segment; sequence CLTGLLVILYGMLLLVE. Over 187 to 303 the chain is Cytoplasmic; sequence VNVIRVRRYV…AFGRRLVLSS (117 aa). Positions 299 to 602 constitute an ABC transmembrane type-1 1 domain; it reads LVLSSTFRIL…LSSVVRSTVK (304 aa). Residues 304–319 form a helical membrane-spanning segment; the sequence is TFRILADLLGFAGPLC. The Extracellular segment spans residues 320–356; that stretch reads IFGIVDHLGKENHVFQPKTQFLGVYFVSSQEFLGNAY. The chain crosses the membrane as a helical span at residues 357 to 372; the sequence is VLAVLLFLALLLQRTF. Residues 373 to 438 are Cytoplasmic-facing; that stretch reads LQASYYVAIE…MWFFFLCPNL (66 aa). Residues 439 to 454 traverse the membrane as a helical segment; it reads WAMPVQIIVGVILLYY. Topologically, residues 455–460 are extracellular; that stretch reads ILGVSA. A helical transmembrane segment spans residues 461–473; sequence LIGAAVIILLAPV. The Cytoplasmic portion of the chain corresponds to 474-541; the sequence is QYFVATKLSQ…SLRAFAVYTS (68 aa). The chain crosses the membrane as a helical span at residues 542–557; it reads ISIFMNTAIPIAAVLI. The Extracellular segment spans residues 558-576; it reads TFVGHVSFFKESDFSPSVA. The chain crosses the membrane as a helical span at residues 577–592; sequence FASLSLFHILVTPLFL. At 593-1013 the chain is on the cytoplasmic side; the sequence is LSSVVRSTVK…YLSSAGILLL (421 aa). The ABC transporter 1 domain occupies 679-930; the sequence is VQIIGGFFTW…ECQLFEHWKT (252 aa). ATP contacts are provided by Trp-688, Gly-716, Ser-720, and Ser-721. Ser-720 is a Mg(2+) binding site. A disordered region spans residues 741 to 768; it reads SSLPDSEGEDPSNPERETAADSDARSRG. Over residues 753–766 the composition is skewed to basic and acidic residues; it reads NPERETAADSDARS. Mg(2+) is bound at residue Gln-775. Basic and acidic residues predominate over residues 939-950; that stretch reads LEKETVMERKAP. Residues 939 to 962 form a disordered region; that stretch reads LEKETVMERKAPEPSQGLPRAMSS. The ABC transmembrane type-1 2 domain maps to 1013 to 1307; that stretch reads LSLLVFSQLL…MVRNLADMEI (295 aa). The helical transmembrane segment at 1014–1031 threads the bilayer; the sequence is SLLVFSQLLKHMVLVAID. The Extracellular segment spans residues 1032–1067; that stretch reads YWLAKWTDSALVLSPAARNCSLSQECALDQSVYAMV. Asn-1050 carries an N-linked (GlcNAc...) asparagine glycan. The helical transmembrane segment at 1068–1084 threads the bilayer; sequence FTVLCSLGIALCLVTSV. Topologically, residues 1085–1143 are cytoplasmic; it reads TVEWTGLKVAKRLHRSLLNRIILAPMRFFETTPLGSILNRFSSDCNTIDQHIPSTLECL. A helical transmembrane segment spans residues 1144 to 1161; sequence SRSTLLCVSALAVISYVT. A topological domain (extracellular) is located at residue Pro-1162. A helical membrane pass occupies residues 1163-1175; it reads VFLVALLPLAVVC. Residues 1176-1249 lie on the Cytoplasmic side of the membrane; it reads YFIQKYFRVA…FLTAANRWLE (74 aa). Residues 1250 to 1265 form a helical membrane-spanning segment; it reads VRMEYIGACVVLIAAA. Over 1266-1281 the chain is Extracellular; the sequence is TSISNSLHRELSAGLV. The helical transmembrane segment at 1282-1297 threads the bilayer; that stretch reads GLGLTYALMVSNYLNW. The Cytoplasmic portion of the chain corresponds to 1298–1582; that stretch reads MVRNLADMEI…VFASFVRADK (285 aa). In terms of domain architecture, ABC transporter 2 spans 1345–1579; that stretch reads IQIQNLSVRY…KDSVFASFVR (235 aa). Residues Thr-1381, Gly-1382, Gly-1384, Lys-1385, Ser-1386, and Ser-1387 each contribute to the ADP site. Ser-1483 is an ATP binding site.

This sequence belongs to the ABC transporter superfamily. ABCC family. Conjugate transporter (TC 3.A.1.208) subfamily. Forms an heterooctamer with KCNJ11; four ABCC8/SUR1 molecules interact with one KCNJ11 homotetramer.

The protein resides in the cell membrane. KATP channels are regulated by cytoplasmic ATP/ADP ratios; ATP inhibits the channel by closing the pore, while ADP activates the channel. Activated by phosphatidylinositol 4,5-biphosphate (PtdIns(4,5)P2). Functionally, regulator subunit of pancreatic ATP-sensitive potassium channel (KATP), playing a major role in the regulation of insulin release. In pancreatic cells, it forms KATP channels with KCNJ11; KCNJ11 forms the channel pore while ABCC8 is required for activation and regulation. The protein is ATP-binding cassette sub-family C member 8 (Abcc8) of Rattus norvegicus (Rat).